The chain runs to 264 residues: Merozoite surface protein 2 (264 aa).

An N-terminal signal peptide occupies residues M1–I20. N-linked (GlcNAc...) asparagine glycosylation is found at N22 and N36. The interval A44 to A190 is polymorphic region. The interval E46–E227 is disordered. 2 repeat units span residues A60 to A91 and A92 to A123. Residues A60 to A123 are 2 X 32 AA perfects repeats. Positions S70–N81 are enriched in low complexity. A compositionally biased stretch (polar residues) spans G82–R101. The span at S102–S145 shows a compositional bias: low complexity. Basic and acidic residues predominate over residues T154 to E166. N213 carries N-linked (GlcNAc...) asparagine glycosylation. Basic and acidic residues predominate over residues S217 to K226. Cysteines 221 and 229 form a disulfide. The N-linked (GlcNAc...) asparagine glycan is linked to N238. The GPI-anchor amidated asparagine moiety is linked to residue N238. The propeptide at S239 to I264 is removed in mature form.

Its subcellular location is the cell membrane. Functionally, may play a role in the merozoite attachment to the erythrocyte. In Plasmodium falciparum (isolate FC27 / Papua New Guinea), this protein is Merozoite surface protein 2.